Here is a 340-residue protein sequence, read N- to C-terminus: Adenine deaminase (340 aa).

Zn(2+) contacts are provided by His-17, His-19, and His-197. Glu-200 serves as the catalytic Proton donor. A Zn(2+)-binding site is contributed by Asp-278. A substrate-binding site is contributed by Asp-279.

The protein belongs to the metallo-dependent hydrolases superfamily. Adenosine and AMP deaminases family. Adenine deaminase type 2 subfamily. Zn(2+) serves as cofactor.

The enzyme catalyses adenine + H2O + H(+) = hypoxanthine + NH4(+). Functionally, catalyzes the hydrolytic deamination of adenine to hypoxanthine. Plays an important role in the purine salvage pathway and in nitrogen catabolism. The chain is Adenine deaminase from Streptomyces coelicolor (strain ATCC BAA-471 / A3(2) / M145).